Consider the following 72-residue polypeptide: Translation initiation factor IF-1 (72 aa).

The S1-like domain occupies 1-72 (MAREDHIEME…SKGRIVYRAR (72 aa)).

This sequence belongs to the IF-1 family. In terms of assembly, component of the 30S ribosomal translation pre-initiation complex which assembles on the 30S ribosome in the order IF-2 and IF-3, IF-1 and N-formylmethionyl-tRNA(fMet); mRNA recruitment can occur at any time during PIC assembly.

The protein resides in the cytoplasm. One of the essential components for the initiation of protein synthesis. Stabilizes the binding of IF-2 and IF-3 on the 30S subunit to which N-formylmethionyl-tRNA(fMet) subsequently binds. Helps modulate mRNA selection, yielding the 30S pre-initiation complex (PIC). Upon addition of the 50S ribosomal subunit IF-1, IF-2 and IF-3 are released leaving the mature 70S translation initiation complex. The polypeptide is Translation initiation factor IF-1 (Chromohalobacter salexigens (strain ATCC BAA-138 / DSM 3043 / CIP 106854 / NCIMB 13768 / 1H11)).